The sequence spans 146 residues: Large ribosomal subunit protein uL23m (146 aa).

The segment at 108-146 (PDLFPEKEPTSPDPLEEELPQQRQSSDPRCPGIPSWFGL) is disordered.

Belongs to the universal ribosomal protein uL23 family. In terms of assembly, component of the mitochondrial ribosome large subunit (39S) which comprises a 16S rRNA and about 50 distinct proteins.

It localises to the mitochondrion. The polypeptide is Large ribosomal subunit protein uL23m (Mrpl23) (Rattus norvegicus (Rat)).